The chain runs to 383 residues: Acetylornithine deacetylase (383 aa).

Position 80 (H80) interacts with Zn(2+). D82 is an active-site residue. D112 is a binding site for Zn(2+). E144 is an active-site residue. 3 residues coordinate Zn(2+): E145, E169, and H355.

The protein belongs to the peptidase M20A family. ArgE subfamily. In terms of assembly, homodimer. It depends on Zn(2+) as a cofactor. The cofactor is Co(2+). Glutathione is required as a cofactor.

Its subcellular location is the cytoplasm. It catalyses the reaction N(2)-acetyl-L-ornithine + H2O = L-ornithine + acetate. The protein operates within amino-acid biosynthesis; L-arginine biosynthesis; L-ornithine from N(2)-acetyl-L-ornithine (linear): step 1/1. In terms of biological role, catalyzes the hydrolysis of the amide bond of N(2)-acetylated L-amino acids. Cleaves the acetyl group from N-acetyl-L-ornithine to form L-ornithine, an intermediate in L-arginine biosynthesis pathway, and a branchpoint in the synthesis of polyamines. This Salmonella arizonae (strain ATCC BAA-731 / CDC346-86 / RSK2980) protein is Acetylornithine deacetylase.